The chain runs to 396 residues: MATLVLDNGAYNAKIGYSHAHVSVIPNCQFRSKTARLKTFTANQLDEIKDPSGLFYILPFQKGYLVNWDVQRQVWDYLFGKEMYQVDFVDTNIIITEPYFNFSSIQESMNEILFEEYQFQAVLRVNAGALSAHRYFRDNPSELCCIIVDSGYSFTHIVPYCRSKKKKEAIIRINVGGKLLTNHLKEIISYRQLHVMDETHVINQVKEDVCYVSQDFYKDMEIAKLKGEENTVMVDYVLPDFSTIKKGFCKPREEMVLSGKYKTGEQILRLTNERFAVPEILFHPSDIGIQEMGIPEAIVDSIQNLPEEMQPHFFKNIVLTGGNTLFPGFRDRVYSEVRCLTPTDYDVSVVLPENPITYSWEGGKLISENDDFEDLVVTREDYEEHGHNICEEKFDI.

It belongs to the actin family. ARP6 subfamily. As to quaternary structure, interacts with CBX1 and CBX3.

It is found in the cytoplasm. Its subcellular location is the cytoskeleton. The protein localises to the nucleus. It localises to the nucleolus. Functionally, required for formation and/or maintenance of the proper nucleolar structure and function. Plays a dual role in the regulation of ribosomal DNA (rDNA) transcription. In the presence of high glucose, it maintains active rDNA transcription through H2A.Z deposition and under glucose starvation, is required for the repression of rDNA transcription, and this function may be independent of H2A.Z. In Gallus gallus (Chicken), this protein is Actin-related protein 6 (ACTR6).